A 919-amino-acid chain; its full sequence is Probable glucan 1,3-alpha-glucosidase (919 aa).

The signal sequence occupies residues 1-28 (MDPPPRPRPHRVAVLLLLLLASSPAARA). The Nucleophile role is filled by aspartate 510. Residue glutamate 513 is part of the active site. The Proton donor role is filled by aspartate 586. Asparagine 802 carries N-linked (GlcNAc...) asparagine glycosylation.

Belongs to the glycosyl hydrolase 31 family. In terms of assembly, heterodimer of a catalytic alpha subunit and a beta subunit.

The protein localises to the endoplasmic reticulum. The catalysed reaction is N(4)-(alpha-D-Glc-(1-&gt;3)-alpha-D-Man-(1-&gt;2)-alpha-D-Man-(1-&gt;2)-alpha-D-Man-(1-&gt;3)-[alpha-D-Man-(1-&gt;2)-alpha-D-Man-(1-&gt;3)-[alpha-D-Man-(1-&gt;2)-alpha-D-Man-(1-&gt;6)]-alpha-D-Man-(1-&gt;6)]-beta-D-Man-(1-&gt;4)-beta-D-GlcNAc-(1-&gt;4)-beta-D-GlcNAc)-L-asparaginyl-[protein] + H2O = N(4)-(alpha-D-Man-(1-&gt;2)-alpha-D-Man-(1-&gt;2)-alpha-D-Man-(1-&gt;3)-[alpha-D-Man-(1-&gt;2)-alpha-D-Man-(1-&gt;3)-[alpha-D-Man-(1-&gt;2)-alpha-D-Man-(1-&gt;6)]-alpha-D-Man-(1-&gt;6)]-beta-D-Man-(1-&gt;4)-beta-D-GlcNAc-(1-&gt;4)-beta-D-GlcNAc)-L-asparaginyl-[protein] (N-glucan mannose isomer 9A1,2,3B1,2,3) + beta-D-glucose. It carries out the reaction N(4)-(alpha-D-Glc-(1-&gt;3)-alpha-D-Glc-(1-&gt;3)-alpha-D-Man-(1-&gt;2)-alpha-D-Man-(1-&gt;2)-alpha-D-Man-(1-&gt;3)-[alpha-D-Man-(1-&gt;2)-alpha-D-Man-(1-&gt;3)-[alpha-D-Man-(1-&gt;2)-alpha-D-Man-(1-&gt;6)]-alpha-D-Man-(1-&gt;6)]-beta-D-Man-(1-&gt;4)-beta-D-GlcNAc-(1-&gt;4)-beta-D-GlcNAc)-L-asparaginyl-[protein] + H2O = N(4)-(alpha-D-Glc-(1-&gt;3)-alpha-D-Man-(1-&gt;2)-alpha-D-Man-(1-&gt;2)-alpha-D-Man-(1-&gt;3)-[alpha-D-Man-(1-&gt;2)-alpha-D-Man-(1-&gt;3)-[alpha-D-Man-(1-&gt;2)-alpha-D-Man-(1-&gt;6)]-alpha-D-Man-(1-&gt;6)]-beta-D-Man-(1-&gt;4)-beta-D-GlcNAc-(1-&gt;4)-beta-D-GlcNAc)-L-asparaginyl-[protein] + beta-D-glucose. The protein operates within glycan metabolism; N-glycan metabolism. In terms of biological role, cleaves sequentially the 2 innermost alpha-1,3-linked glucose residues from the Glc(2)Man(9)GlcNAc(2) oligosaccharide precursor of immature glycoproteins. May be required for defense response elicited by pathogen-associated molecular patterns (PAMPs). The chain is Probable glucan 1,3-alpha-glucosidase from Oryza sativa subsp. japonica (Rice).